Reading from the N-terminus, the 251-residue chain is Diphthine synthase (251 aa).

Residues Leu9, Asp84, Val87, 112-113, Leu160, Ala194, and His219 contribute to the S-adenosyl-L-methionine site; that span reads SI.

The protein belongs to the diphthine synthase family. In terms of assembly, homodimer.

It carries out the reaction 2-[(3S)-amino-3-carboxypropyl]-L-histidyl-[translation elongation factor 2] + 3 S-adenosyl-L-methionine = diphthine-[translation elongation factor 2] + 3 S-adenosyl-L-homocysteine + 3 H(+). Its pathway is protein modification; peptidyl-diphthamide biosynthesis. Its function is as follows. S-adenosyl-L-methionine-dependent methyltransferase that catalyzes the trimethylation of the amino group of the modified target histidine residue in translation elongation factor 2 (EF-2), to form an intermediate called diphthine. The three successive methylation reactions represent the second step of diphthamide biosynthesis. This chain is Diphthine synthase, found in Archaeoglobus fulgidus (strain ATCC 49558 / DSM 4304 / JCM 9628 / NBRC 100126 / VC-16).